Consider the following 219-residue polypeptide: Large ribosomal subunit protein uL3 (219 aa).

The protein belongs to the universal ribosomal protein uL3 family. As to quaternary structure, part of the 50S ribosomal subunit. Forms a cluster with proteins L14 and L19.

Its function is as follows. One of the primary rRNA binding proteins, it binds directly near the 3'-end of the 23S rRNA, where it nucleates assembly of the 50S subunit. This Corynebacterium kroppenstedtii (strain DSM 44385 / JCM 11950 / CIP 105744 / CCUG 35717) protein is Large ribosomal subunit protein uL3.